The following is a 396-amino-acid chain: Putative cytochrome P450 YjiB (396 aa).

C349 is a heme binding site.

It belongs to the cytochrome P450 family. Heme serves as cofactor.

This is Putative cytochrome P450 YjiB (yjiB) from Bacillus subtilis (strain 168).